Here is a 28-residue protein sequence, read N- to C-terminus: Conotoxin Vi14b (28 aa).

Disulfide bonds link Cys-4-Cys-21 and Cys-7-Cys-18. N6-acetyllysine is present on residues Lys-15 and Lys-25.

The two N6-acetyllysines at position 15 and 25 have been deduced from the mass difference of 42. They are not common in venom proteins. In terms of tissue distribution, expressed by the venom gland.

Its subcellular location is the secreted. Functionally, in vitro, inhibits proliferation of the mice ovarian cancer cells ID8. The polypeptide is Conotoxin Vi14b (Conus virgo (Virgin cone)).